Reading from the N-terminus, the 1619-residue chain is ATP-dependent helicase ULS1 (1619 aa).

Positions 7–10 (IDLT) match the SUMO interacting motif; type a 1 motif. The segment covering 86–102 (STFNNEKSSNEVKQQQV) has biased composition (polar residues). 4 disordered regions span residues 86 to 123 (STFN…SSPS), 200 to 279 (NNKP…VESS), 347 to 371 (PILP…NSSI), and 429 to 450 (SGSN…SVLQ). A compositionally biased stretch (basic and acidic residues) spans 103 to 118 (LKEETMGSSNDEKKTQ). The residue at position 121 (Ser121) is a Phosphoserine. The span at 200-210 (NNKPSQQQFSD) shows a compositional bias: polar residues. Residues 211–226 (PETKDNSLKSENKDQI) show a composition bias toward basic and acidic residues. Composition is skewed to polar residues over residues 242–259 (SAFQ…TIPN) and 269–279 (LPSNLSSVESS). Residues 353 to 366 (NMDHTTHNSHDSEQ) show a composition bias toward basic and acidic residues. The SUMO interacting motif; type b 1 signature appears at 371 to 378 (IIILSDED). The SUMO interacting motif; type a 2 motif lies at 470 to 473 (LDTL). The SUMO interacting motif; type b 2 motif lies at 543–550 (ILVDEAEN). The region spanning 956 to 1157 (QVENSAKKGG…YSLIRFLRIP (202 aa)) is the Helicase ATP-binding domain. 969–976 (DDMGLGKT) is an ATP binding site. An RING-type zinc finger spans residues 1330–1386 (CFWCMEQLEPEAMSVLTGCGHLICDTCIEPFIEESSMLPQAKKTKGGAFAIPCKDCQ). The Helicase C-terminal domain occupies 1447-1606 (QCIQVIQRVF…GKIKEVNSLG (160 aa)).

Belongs to the SNF2/RAD54 helicase family. In terms of assembly, interacts with CDC3, CDC11, EBP2, SIR4, UBC4 and SUMO/SMT3.

It localises to the nucleus. Its function is as follows. ATP-dependent helicase involved mating type switching and in silencing interference through its interaction with the silencing regulator SIR4. Cooperates with UBC4 and UBC5 to mediate ubiquitination of SUMO conjugates. This is ATP-dependent helicase ULS1 (ULS1) from Saccharomyces cerevisiae (strain ATCC 204508 / S288c) (Baker's yeast).